Here is a 223-residue protein sequence, read N- to C-terminus: Putative nudix hydrolase 2 (223 aa).

Positions 72-213 (ASADGVSIIA…SIVVESTLLA (142 aa)) constitute a Nudix hydrolase domain. A Nudix box motif is present at residues 111-132 (GLIDAGETAQQAAIRELKEETG). Mg(2+) is bound by residues glutamate 126 and glutamate 130.

The protein belongs to the Nudix hydrolase family. Mg(2+) serves as cofactor. The cofactor is Mn(2+).

Probably mediates the hydrolysis of some nucleoside diphosphate derivatives. The protein is Putative nudix hydrolase 2 (ndx-2) of Caenorhabditis elegans.